The following is a 325-amino-acid chain: WUSCHEL-related homeobox 8 (325 aa).

A DNA-binding region (homeobox; WUS-type) is located at residues 51-115 (DPKPRWNPKP…NRKSRAKHKL (65 aa)).

Belongs to the WUS homeobox family. Expressed only in the egg cell. Not detected in the pollen tube. Expressed in the zygote, the basal cell, and later the suspensor. Expressed in all suspensor cells, except the hypophysis, and in the embryo surrounding region (ESR) endosperm cells. Strongly expressed in the suspensor cells, with a weak expression also detected throughout the developing embryo.

The protein localises to the nucleus. In terms of biological role, probable transcription factor, which may be involved in embryonic patterning. May be required for basal embryo development after fertilization. Acts partially redundantly with STIP in promoting embryonic cell division and proliferation. Promotes cotyledon boundary formation by maintaining the symmetry in CUC genes expression domains. This Arabidopsis thaliana (Mouse-ear cress) protein is WUSCHEL-related homeobox 8.